Here is a 152-residue protein sequence, read N- to C-terminus: Large ribosomal subunit protein bL9 (152 aa).

The protein belongs to the bacterial ribosomal protein bL9 family.

Binds to the 23S rRNA. The sequence is that of Large ribosomal subunit protein bL9 from Gloeothece citriformis (strain PCC 7424) (Cyanothece sp. (strain PCC 7424)).